The following is a 1172-amino-acid chain: Structural maintenance of chromosomes protein 2 (1172 aa).

An ATP-binding site is contributed by 32–39 (GLNGSGKS). Coiled-coil stretches lie at residues 172-204 (RMFE…EEIE) and 258-507 (SHIA…AYME). One can recognise an SMC hinge domain in the interval 520–640 (SKVKGLVAQL…CDTPESAKKV (121 aa)). Residues 676–941 (LLQIQKLNSL…INHLEKENDW (266 aa)) adopt a coiled-coil conformation.

The protein belongs to the SMC family. SMC2 subfamily. Forms a heterodimer with cut3/smc4. Component of the condensin complex, which contains the cut3 and cut14 heterodimer, and three non smc subunits that probably regulate the complex: cnd1, cnd2 and cnd3.

It is found in the nucleus. It localises to the cytoplasm. The protein localises to the chromosome. In terms of biological role, central component of the condensin complex, a complex required for conversion of interphase chromatin into mitotic-like condense chromosomes. The condensin complex probably introduces positive supercoils into relaxed DNA in the presence of type I topoisomerases and converts nicked DNA into positive knotted forms in the presence of type II topoisomerases. The chain is Structural maintenance of chromosomes protein 2 (cut14) from Schizosaccharomyces pombe (strain 972 / ATCC 24843) (Fission yeast).